The chain runs to 199 residues: Putative rhomboid protease YdcA (199 aa).

The next 6 membrane-spanning stretches (helical) occupy residues leucine 14–leucine 34, isoleucine 65–alanine 85, phenylalanine 97–proline 117, histidine 122–phenylalanine 142, isoleucine 147–phenylalanine 167, and isoleucine 172–valine 192. Residue serine 126 is the Nucleophile of the active site. The active-site Charge relay system is histidine 177.

Belongs to the peptidase S54 family.

It localises to the cell membrane. In Bacillus subtilis (strain 168), this protein is Putative rhomboid protease YdcA (ydcA).